The following is a 356-amino-acid chain: S-adenosylmethionine:tRNA ribosyltransferase-isomerase (356 aa).

The protein belongs to the QueA family. As to quaternary structure, monomer.

It localises to the cytoplasm. It catalyses the reaction 7-aminomethyl-7-carbaguanosine(34) in tRNA + S-adenosyl-L-methionine = epoxyqueuosine(34) in tRNA + adenine + L-methionine + 2 H(+). It participates in tRNA modification; tRNA-queuosine biosynthesis. Transfers and isomerizes the ribose moiety from AdoMet to the 7-aminomethyl group of 7-deazaguanine (preQ1-tRNA) to give epoxyqueuosine (oQ-tRNA). The protein is S-adenosylmethionine:tRNA ribosyltransferase-isomerase of Xanthomonas campestris pv. campestris (strain B100).